Reading from the N-terminus, the 118-residue chain is Immunoglobulin lambda variable 2-8 (118 aa).

A signal peptide spans 1 to 19; that stretch reads MAWALLLLTLLTQGTGSWA. Gln-20 bears the Pyrrolidone carboxylic acid mark. The framework-1 stretch occupies residues 20 to 44; the sequence is QSALTQPPSASGSPGQSVTISCTGT. The Ig-like domain occupies 20–118; sequence QSALTQPPSA…CSSYAGSNNF (99 aa). A disulfide bridge links Cys-41 with Cys-109. The tract at residues 45-53 is complementarity-determining-1; sequence SSDVGGYNY. Residues 54–70 form a framework-2 region; the sequence is VSWYQQHPGKAPKLMIY. The tract at residues 71–73 is complementarity-determining-2; it reads EVS. Residues 74–109 form a framework-3 region; the sequence is KRPSGVPDRFSGSKSGNTASLTVSGLQAEDEADYYC. A disordered region spans residues 76–97; the sequence is PSGVPDRFSGSKSGNTASLTVS. Residues 85-97 are compositionally biased toward polar residues; the sequence is GSKSGNTASLTVS. The tract at residues 110 to 118 is complementarity-determining-3; it reads SSYAGSNNF.

In terms of assembly, immunoglobulins are composed of two identical heavy chains and two identical light chains; disulfide-linked.

It is found in the secreted. Its subcellular location is the cell membrane. Its function is as follows. V region of the variable domain of immunoglobulin light chains that participates in the antigen recognition. Immunoglobulins, also known as antibodies, are membrane-bound or secreted glycoproteins produced by B lymphocytes. In the recognition phase of humoral immunity, the membrane-bound immunoglobulins serve as receptors which, upon binding of a specific antigen, trigger the clonal expansion and differentiation of B lymphocytes into immunoglobulins-secreting plasma cells. Secreted immunoglobulins mediate the effector phase of humoral immunity, which results in the elimination of bound antigens. The antigen binding site is formed by the variable domain of one heavy chain, together with that of its associated light chain. Thus, each immunoglobulin has two antigen binding sites with remarkable affinity for a particular antigen. The variable domains are assembled by a process called V-(D)-J rearrangement and can then be subjected to somatic hypermutations which, after exposure to antigen and selection, allow affinity maturation for a particular antigen. In Homo sapiens (Human), this protein is Immunoglobulin lambda variable 2-8.